The primary structure comprises 1094 residues: Probable arabinosyltransferase C (1094 aa).

13 helical membrane passes run 28 to 50, 232 to 251, 264 to 286, 341 to 360, 373 to 392, 431 to 453, 466 to 488, 530 to 552, 565 to 582, 586 to 608, 620 to 642, 657 to 679, and 700 to 722; these read IARY…TPLL, AAMI…LHIL, PARW…WWHF, SIWM…WVIS, TSRA…WLPL, IGAL…LVAI, RFGV…IPIF, SIAR…AMSL, SRRI…MMFT, WTHH…AVAV, TVFA…GWWY, WRWS…AAWF, and LAGI…EVVS. Residues 817–831 are compositionally biased toward low complexity; it reads GSEPGTEGGTTAAPG. The disordered stretch occupies residues 817 to 836; the sequence is GSEPGTEGGTTAAPGINGSR.

It belongs to the emb family.

It is found in the cell membrane. In terms of biological role, arabinosyl transferase responsible for the polymerization of arabinose into the arabinan of arabinogalactan. This is Probable arabinosyltransferase C (embC) from Mycobacterium tuberculosis (strain CDC 1551 / Oshkosh).